A 475-amino-acid chain; its full sequence is Probable pectate lyase 7 (475 aa).

The signal sequence occupies residues 1 to 24 (METARLFKLVCVICIASLIPTIRA). 2 N-linked (GlcNAc...) asparagine glycosylation sites follow: Asn-67 and Asn-96. Residues 91 to 117 (ISSPTNSTRRSLTGRGKGKGKGKWSKL) are disordered. Asp-271, Asp-295, and Asp-299 together coordinate Ca(2+). Residue Arg-351 is part of the active site.

It belongs to the polysaccharide lyase 1 family. It depends on Ca(2+) as a cofactor.

It carries out the reaction Eliminative cleavage of (1-&gt;4)-alpha-D-galacturonan to give oligosaccharides with 4-deoxy-alpha-D-galact-4-enuronosyl groups at their non-reducing ends.. It functions in the pathway glycan metabolism; pectin degradation; 2-dehydro-3-deoxy-D-gluconate from pectin: step 2/5. The sequence is that of Probable pectate lyase 7 from Arabidopsis thaliana (Mouse-ear cress).